A 136-amino-acid chain; its full sequence is Plastocyanin (136 aa).

The first 34 residues, 1 to 34 (MSLVFNLVKRLQLILLSLVVGGLAVAFLSNPAAA), serve as a signal peptide directing secretion. Positions 35–136 (ETYIVKMGSD…GMVGKIIVNG (102 aa)) constitute a Plastocyanin-like domain. Residues H73, C120, H123, and M128 each coordinate Cu cation.

Belongs to the plastocyanin family. Requires Cu(2+) as cofactor.

It localises to the cellular thylakoid membrane. Participates in electron transfer between P700 and the cytochrome b6-f complex in photosystem I. The polypeptide is Plastocyanin (Synechococcus sp. (strain JA-2-3B'a(2-13)) (Cyanobacteria bacterium Yellowstone B-Prime)).